The sequence spans 885 residues: Alanine--tRNA ligase (885 aa).

His-572, His-576, Cys-675, and His-679 together coordinate Zn(2+).

It belongs to the class-II aminoacyl-tRNA synthetase family. Requires Zn(2+) as cofactor.

It localises to the cytoplasm. The catalysed reaction is tRNA(Ala) + L-alanine + ATP = L-alanyl-tRNA(Ala) + AMP + diphosphate. Functionally, catalyzes the attachment of alanine to tRNA(Ala) in a two-step reaction: alanine is first activated by ATP to form Ala-AMP and then transferred to the acceptor end of tRNA(Ala). Also edits incorrectly charged Ser-tRNA(Ala) and Gly-tRNA(Ala) via its editing domain. The protein is Alanine--tRNA ligase of Leifsonia xyli subsp. xyli (strain CTCB07).